The following is a 463-amino-acid chain: DDB1- and CUL4-associated factor 12-like protein 1 (463 aa).

The tract at residues 1–35 (MAQQQTGSRKRKAPAVEADAESSPSQGLAAADGEG) is disordered. WD repeat units lie at residues 87 to 137 (LTER…PLLR), 138 to 184 (DSEA…SLDP), 185 to 252 (LCLG…DVEA), 253 to 297 (IPRA…ALSR), 298 to 341 (LLSI…QQNI), and 342 to 376 (RPLC…LFYD).

This sequence belongs to the WD repeat DCAF12 family.

This chain is DDB1- and CUL4-associated factor 12-like protein 1 (DCAF12L1), found in Homo sapiens (Human).